The chain runs to 198 residues: tRNA(Phe) 7-((3-amino-3-carboxypropyl)-4-demethylwyosine(37)-N(4))-methyltransferase 1 (198 aa).

It belongs to the TYW3 family.

It carries out the reaction 4-demethyl-7-[(3S)-3-amino-3-carboxypropyl]wyosine(37) in tRNA(Phe) + S-adenosyl-L-methionine = 7-[(3S)-3-amino-3-carboxypropyl]wyosine(37) in tRNA(Phe) + S-adenosyl-L-homocysteine + H(+). Functionally, S-adenosyl-L-methionine-dependent methyltransferase that acts as a component of the wyosine derivatives biosynthesis pathway. Probably methylates N-4 position of wybutosine-86 to produce wybutosine-72. The chain is tRNA(Phe) 7-((3-amino-3-carboxypropyl)-4-demethylwyosine(37)-N(4))-methyltransferase 1 from Thermococcus kodakarensis (strain ATCC BAA-918 / JCM 12380 / KOD1) (Pyrococcus kodakaraensis (strain KOD1)).